The sequence spans 171 residues: Transcription elongation factor GreB (171 aa).

Residues 53-75 adopt a coiled-coil conformation; that stretch reads KKRLREIDRRVRFLAKRLEVLKI.

The protein belongs to the GreA/GreB family. GreB subfamily.

In terms of biological role, necessary for efficient RNA polymerase transcription elongation past template-encoded arresting sites. The arresting sites in DNA have the property of trapping a certain fraction of elongating RNA polymerases that pass through, resulting in locked ternary complexes. Cleavage of the nascent transcript by cleavage factors such as GreA or GreB allows the resumption of elongation from the new 3'terminus. GreB releases sequences of up to 9 nucleotides in length. The protein is Transcription elongation factor GreB of Yersinia pestis.